The chain runs to 364 residues: Pectinesterase 1 (364 aa).

Residues 1–22 (MSCIAVEAVLLGILLYIPIVLS) form the signal peptide. A glycan (N-linked (GlcNAc...) asparagine) is linked at Asn-103. Residue Asp-220 is part of the active site.

The protein belongs to the pectinesterase family. Glycosylated. In terms of tissue distribution, expressed in pollen.

Its subcellular location is the secreted. The enzyme catalyses [(1-&gt;4)-alpha-D-galacturonosyl methyl ester](n) + n H2O = [(1-&gt;4)-alpha-D-galacturonosyl](n) + n methanol + n H(+). It participates in glycan metabolism; pectin degradation; 2-dehydro-3-deoxy-D-gluconate from pectin: step 1/5. Its function is as follows. Catalyzes the demethylesterification of homogalacturonan components of pectin. May be involved in pollen tube development. The chain is Pectinesterase 1 from Olea europaea (Common olive).